The primary structure comprises 347 residues: MDVNLFDFHLPEEQIAQVPLLDRTSSKLMVVNRETGALRHEKFHDIVSYFNAGDTLVINDTKVLPARLFGVKEETGGKIELLLLKQTSDDVWETLAKPAKRVKPGTVLSFGDGLLRAECVEALDDGGRILKFSYTGIFYEVLDQLGTMPLPPYIHEQLEDQDRYQTVYARERGSAAAPTAGLHFTPELLQALTDKGVQLAPLTLHVGLGTFRPVSVDDVDSHKMHSEYYELPESSAKILRETRKNGGRIIAVGTTSTRTLETVIRDHGDFVEASGWTDIFIYPGQEIKGIDGLITNFHLPKSTLIMLVSALSTREHILHAYEEAVAQNYRFFSFGDAMFLTREELNR.

It belongs to the QueA family. Monomer.

It localises to the cytoplasm. It carries out the reaction 7-aminomethyl-7-carbaguanosine(34) in tRNA + S-adenosyl-L-methionine = epoxyqueuosine(34) in tRNA + adenine + L-methionine + 2 H(+). The protein operates within tRNA modification; tRNA-queuosine biosynthesis. Functionally, transfers and isomerizes the ribose moiety from AdoMet to the 7-aminomethyl group of 7-deazaguanine (preQ1-tRNA) to give epoxyqueuosine (oQ-tRNA). This is S-adenosylmethionine:tRNA ribosyltransferase-isomerase from Exiguobacterium sibiricum (strain DSM 17290 / CCUG 55495 / CIP 109462 / JCM 13490 / 255-15).